Consider the following 344-residue polypeptide: Dihydroorotase (344 aa).

Histidine 13 and histidine 15 together coordinate Zn(2+). Residues 15–17 (HLR) and asparagine 41 contribute to the substrate site. Zn(2+) is bound by residues lysine 98, histidine 135, and histidine 173. An N6-carboxylysine modification is found at lysine 98. Histidine 135 is a substrate binding site. Residue leucine 218 coordinates substrate. Aspartate 247 lines the Zn(2+) pocket. The active site involves aspartate 247. Positions 251 and 263 each coordinate substrate.

The protein belongs to the metallo-dependent hydrolases superfamily. DHOase family. Class II DHOase subfamily. As to quaternary structure, homodimer. The cofactor is Zn(2+).

It catalyses the reaction (S)-dihydroorotate + H2O = N-carbamoyl-L-aspartate + H(+). It participates in pyrimidine metabolism; UMP biosynthesis via de novo pathway; (S)-dihydroorotate from bicarbonate: step 3/3. Catalyzes the reversible cyclization of carbamoyl aspartate to dihydroorotate. This is Dihydroorotase from Neisseria gonorrhoeae (strain NCCP11945).